The primary structure comprises 81 residues: Protein Vpu (81 aa).

Residues 1–7 (MQSLEIV) are Extracellular-facing. Residues 8–28 (AIVELVVAAIIAIVVWTIVFI) traverse the membrane as a helical segment. Residues 29 to 81 (EYRKILRQRKIDRLIDRIREREEDNGNESEGDQEELSALVEMGHHAPWNVDDL) lie on the Cytoplasmic side of the membrane. Residues 50–81 (EEDNGNESEGDQEELSALVEMGHHAPWNVDDL) are disordered. Residues 53–63 (NGNESEGDQEE) are compositionally biased toward acidic residues. Serine 57 carries the phosphoserine; by host CK2 modification.

The protein belongs to the HIV-1 VPU protein family. As to quaternary structure, homopentamer. Interacts with host CD4 and BRTC; these interactions induce proteasomal degradation of CD4. Interacts with host BST2; this interaction leads to the degradation of host BST2. Interacts with host FBXW11. Interacts with host AP1M1; this interaction plays a role in the mistrafficking and subsequent degradation of host BST2. Interacts with host RANBP2; this interaction allows Vpu to down-regulate host BLM sumoylation. Phosphorylated by host CK2. This phosphorylation is necessary for interaction with human BTRC and degradation of CD4.

It is found in the host membrane. With respect to regulation, ion channel activity is inhibited by hexamethylene amiloride in vitro. Its function is as follows. Enhances virion budding by targeting host CD4 and Tetherin/BST2 to proteasome degradation. Degradation of CD4 prevents any unwanted premature interactions between viral Env and its host receptor CD4 in the endoplasmic reticulum. Degradation of antiretroviral protein Tetherin/BST2 is important for virion budding, as BST2 tethers new viral particles to the host cell membrane. Mechanistically, Vpu bridges either CD4 or BST2 to BTRC, a substrate recognition subunit of the Skp1/Cullin/F-box protein E3 ubiquitin ligase, induces their ubiquitination and subsequent proteasomal degradation. The alteration of the E3 ligase specificity by Vpu seems to promote the degradation of host IKBKB, leading to NF-kappa-B down-regulation and subsequent apoptosis. Acts as a viroporin that forms an oligomeric ion channel in membranes. Modulates the host DNA repair mechanisms to promote degradation of nuclear viral cDNA in cells that are already productively infected in order to suppress immune sensing and proviral hyper-integration (superinfection). Manipulates PML-NBs and modulates SUMOylation of host BLM protein thereby enhancing its DNA-end processing activity toward viral unintegrated linear DNA. Also inhibits RAD52-mediated homologous repair of viral cDNA, preventing the generation of dead-end circular forms of single copies of the long terminal repeat and permitting sustained nucleolytic attack. The polypeptide is Protein Vpu (Homo sapiens (Human)).